We begin with the raw amino-acid sequence, 223 residues long: Triosephosphate isomerase (223 aa).

6–8 (NLK) lines the substrate pocket. The active-site Electrophile is His86. Glu151 acts as the Proton acceptor in catalysis. Substrate is bound by residues Gly157 and Ser187.

The protein belongs to the triosephosphate isomerase family. In terms of assembly, homodimer.

The protein resides in the cytoplasm. The enzyme catalyses D-glyceraldehyde 3-phosphate = dihydroxyacetone phosphate. It participates in carbohydrate biosynthesis; gluconeogenesis. The protein operates within carbohydrate degradation; glycolysis; D-glyceraldehyde 3-phosphate from glycerone phosphate: step 1/1. Functionally, involved in the gluconeogenesis. Catalyzes stereospecifically the conversion of dihydroxyacetone phosphate (DHAP) to D-glyceraldehyde-3-phosphate (G3P). In Campylobacter jejuni subsp. doylei (strain ATCC BAA-1458 / RM4099 / 269.97), this protein is Triosephosphate isomerase.